Reading from the N-terminus, the 302-residue chain is Ribonucleoside-diphosphate reductase small subunit (302 aa).

Fe cation contacts are provided by E61, E91, and H94. Y98 is an active-site residue. A helical membrane pass occupies residues 147–167 (ILVFLLIEGIFFISSFYSIAL). 3 residues coordinate Fe cation: E154, E188, and H191.

The protein belongs to the ribonucleoside diphosphate reductase small chain family. In terms of assembly, heterotetramer composed of a homodimer of the large subunit (R1) and a homodimer of the small subunit (R2). Larger multisubunit protein complex are also active, composed of (R1)n(R2)n. Requires Fe cation as cofactor.

It localises to the host membrane. The enzyme catalyses a 2'-deoxyribonucleoside 5'-diphosphate + [thioredoxin]-disulfide + H2O = a ribonucleoside 5'-diphosphate + [thioredoxin]-dithiol. Functionally, ribonucleoside-diphosphate reductase holoenzyme provides the precursors necessary for viral DNA synthesis. Allows virus growth in non-dividing cells, as well as reactivation from latency in infected hosts. Catalyzes the biosynthesis of deoxyribonucleotides from the corresponding ribonucleotides. The protein is Ribonucleoside-diphosphate reductase small subunit of Homo sapiens (Human).